The primary structure comprises 59 residues: Large ribosomal subunit protein bL32 (59 aa).

The interval 1–40 (MAVQQNKKSPSKRGMHRSHDFLRTTPLSVDPGTGEVHLRH) is disordered.

It belongs to the bacterial ribosomal protein bL32 family.

The protein is Large ribosomal subunit protein bL32 of Nitrosospira multiformis (strain ATCC 25196 / NCIMB 11849 / C 71).